A 213-amino-acid chain; its full sequence is CDP-diacylglycerol--inositol 3-phosphatidyltransferase (213 aa).

Residues 1–5 lie on the Cytoplasmic side of the membrane; it reads MPEEN. A helical transmembrane segment spans residues 6–26; the sequence is IFLFVPNLIGYARIVFAIISF. Tyrosine 27 is a topological domain (lumenal). A helical transmembrane segment spans residues 28–48; sequence FMPCCPFTASSFYLLSGLLDA. Mg(2+) contacts are provided by aspartate 47 and aspartate 50. The Cytoplasmic segment spans residues 49 to 73; it reads FDGHAARALNQGTRFGAMLDMLTDR. 3 residues coordinate a CDP-1,2-diacyl-sn-glycerol: glycine 51, arginine 55, and threonine 61. Mg(2+)-binding residues include aspartate 68 and aspartate 72. Residue aspartate 72 is the Proton acceptor of the active site. The helical transmembrane segment at 74–94 threads the bilayer; the sequence is CATMCLLVNLALLYPRATLLF. A topological domain (lumenal) is located at residue glutamine 95. Residues 96-116 traverse the membrane as a helical segment; the sequence is LSMSLDVASHWLHLHSSVVRG. Topologically, residues 117–139 are cytoplasmic; sequence SESHKMIDLSGNPVLRIYYTSRP. A helical membrane pass occupies residues 140-160; that stretch reads ALFTLCAGNELFYCLLYLFNF. The Lumenal segment spans residues 161-174; it reads SEGPLVGSVGLFRM. Residues 175–195 traverse the membrane as a helical segment; that stretch reads GLWVTAPIALLKSVISVIHLI. The Cytoplasmic portion of the chain corresponds to 196–213; sequence TAARNMAALDAADRAKKK.

It belongs to the CDP-alcohol phosphatidyltransferase class-I family. Mn(2+) is required as a cofactor. Mg(2+) serves as cofactor.

Its subcellular location is the endoplasmic reticulum membrane. It localises to the cell membrane. The enzyme catalyses a CDP-1,2-diacyl-sn-glycerol + myo-inositol = a 1,2-diacyl-sn-glycero-3-phospho-(1D-myo-inositol) + CMP + H(+). Catalyzes the biosynthesis of phosphatidylinositol (PtdIns) as well as PtdIns:inositol exchange reaction. May thus act to reduce an excessive cellular PtdIns content. The exchange activity is due to the reverse reaction of PtdIns synthase and is dependent on CMP, which is tightly bound to the enzyme. In Mus musculus (Mouse), this protein is CDP-diacylglycerol--inositol 3-phosphatidyltransferase.